Consider the following 456-residue polypeptide: UDP-N-acetylmuramoylalanine--D-glutamate ligase (456 aa).

121–127 provides a ligand contact to ATP; sequence GTNGKTT.

This sequence belongs to the MurCDEF family.

It is found in the cytoplasm. It carries out the reaction UDP-N-acetyl-alpha-D-muramoyl-L-alanine + D-glutamate + ATP = UDP-N-acetyl-alpha-D-muramoyl-L-alanyl-D-glutamate + ADP + phosphate + H(+). The protein operates within cell wall biogenesis; peptidoglycan biosynthesis. In terms of biological role, cell wall formation. Catalyzes the addition of glutamate to the nucleotide precursor UDP-N-acetylmuramoyl-L-alanine (UMA). This chain is UDP-N-acetylmuramoylalanine--D-glutamate ligase, found in Desulfotalea psychrophila (strain LSv54 / DSM 12343).